An 88-amino-acid polypeptide reads, in one-letter code: Small ribosomal subunit protein bS20 (88 aa).

Disordered regions lie at residues 1 to 25 (MANS…KARR) and 61 to 88 (GVTK…ALGA).

It belongs to the bacterial ribosomal protein bS20 family.

Functionally, binds directly to 16S ribosomal RNA. This chain is Small ribosomal subunit protein bS20, found in Jannaschia sp. (strain CCS1).